The sequence spans 1450 residues: Collagen alpha-1(I) chain (1450 aa).

Positions 1-22 (MFSFVDNRLLVLLAACVLLVRA) are cleaved as a signal peptide. The propeptide at 23-148 (LDQEDIESGL…PPGLGGNFAP (126 aa)) is N-terminal propeptide. The VWFC domain maps to 31–90 (GLCHQEGTTYSDKDVWKPEPCVICVCDNGNIMCDDVTCGDYPVDCPNAEIPFGECCPVCP). Residues 97–1201 (YSEQTGVEGP…EPKSHGDGRY (1105 aa)) are disordered. The segment covering 106 to 116 (PKGEVGPKGDR) has biased composition (basic and acidic residues). Over residues 130–140 (LPGPPGPPGPP) the composition is skewed to pro residues. Gln-149 bears the Pyrrolidone carboxylic acid mark. An Allysine modification is found at Lys-157. The span at 166–181 (PMGPMGPRGPPGPSGS) shows a compositional bias: pro residues. Pro-176, Pro-182, Pro-194, Pro-197, Pro-212, Pro-227, Pro-242, and Pro-248 each carry 4-hydroxyproline. Over residues 182 to 206 (PGPQGFQGPSGEPGEPGAAGALGPR) the composition is skewed to low complexity. Positions 215–229 (NGDDGESGKPGRPGE) are enriched in basic and acidic residues. Lys-251 carries the post-translational modification 5-hydroxylysine; alternate. O-linked (Gal...) hydroxylysine; alternate glycosylation occurs at Lys-251. The segment covering 266–292 (NGPAGPKGEPGNPGENGAPGQAGPRGL) has biased composition (low complexity). Pro-275, Pro-278, Pro-284, Pro-293, Pro-299, Pro-314, Pro-320, Pro-329, Pro-332, Pro-359, Pro-362, Pro-374, Pro-380, Pro-389, Pro-395, Pro-398, and Pro-413 each carry 4-hydroxyproline. Positions 317–331 (AGPPGPTGPTGPPGF) are enriched in pro residues. Over residues 352 to 374 (PQGARGEPGAPGPAGAAGPSGNP) the composition is skewed to low complexity. A compositionally biased stretch (gly residues) spans 378–387 (GQPGGKGATG). Positions 388-443 (SPGIAGAPGFPGARGAPGPQGPAGAPGPKGNNGEPGAQGNKGEPGAKGEPGPAGVQ) are enriched in low complexity. Residue Lys-416 is modified to 5-hydroxylysine. A 4-hydroxyproline mark is found at Pro-422, Pro-437, Pro-446, Pro-461, Pro-467, Pro-476, and Pro-482. Residues 471–480 (GERGGPGSRG) are compositionally biased toward gly residues. At Lys-491 the chain carries 5-hydroxylysine. Pro-494, Pro-515, Pro-521, Pro-530, Pro-533, Pro-551, Pro-569, Pro-578, Pro-590, Pro-608, Pro-626, Pro-632, Pro-644, Pro-650, Pro-656, and Pro-668 each carry 4-hydroxyproline. Composition is skewed to low complexity over residues 568–578 (FPGPKGAAGEP) and 586–596 (VAGPPGATGAP). The span at 637–650 (PAGEAGKPGEQGAP) shows a compositional bias: low complexity. Gly residues predominate over residues 669 to 678 (GERGGQGPAG). The segment covering 679-701 (AQGPRGSPGSPGNDGAKGEAGAA) has biased composition (low complexity). Residues Pro-689, Pro-704, Pro-710, Pro-716, and Pro-725 each carry the 4-hydroxyproline modification. The segment covering 702–711 (GAPGGRGPPG) has biased composition (gly residues). Lys-737 is modified (5-hydroxylysine). Pro-743, Pro-758, Pro-764, Pro-785, Pro-791, Pro-794, Pro-803, Pro-809, Pro-827, Pro-836, and Pro-845 each carry 4-hydroxyproline. Residues 796–806 (PAGICGPPGAD) are compositionally biased toward low complexity. Positions 817–869 (DAGPKGDAGAPGPAGPTGAPGPAGNVGAPGPKGTRGAAGPPGATGFPGAAGRL) are enriched in low complexity. Lys-848 carries the post-translational modification 5-hydroxylysine. 2 positions are modified to 4-hydroxyproline: Pro-857 and Pro-863. Pro-871 carries the post-translational modification 3-hydroxyproline. A 4-hydroxyproline mark is found at Pro-872, Pro-881, Pro-884, Pro-908, Pro-914, Pro-923, Pro-932, Pro-950, Pro-962, Pro-968, Pro-983, Pro-989, Pro-995, Pro-1004, and Pro-1010. The span at 917–943 (SGEKGSPGSDGPAGAPGIPGPQGIAGQ) shows a compositional bias: low complexity. Residues 982–997 (PPGPSGPPGLGGPPGE) show a composition bias toward pro residues. Lys-1019 carries the 5-hydroxylysine modification. The span at 1028–1043 (SGPPGAPGAPGAPGPV) shows a compositional bias: pro residues. Residues Pro-1031, Pro-1034, and Pro-1037 each carry the 4-hydroxyproline modification. Over residues 1064 to 1078 (AGPSGVRGAPGPAGA) the composition is skewed to low complexity. Basic and acidic residues predominate over residues 1079-1093 (RGDKGEAGEQGERGM). Position 1082 is a 5-hydroxylysine (Lys-1082). Position 1094 is a 5-hydroxylysine; alternate (Lys-1094). Lys-1094 is a glycosylation site (O-linked (Gal...) hydroxylysine; alternate). Residues Pro-1106 and Pro-1109 each carry the 4-hydroxyproline modification. The segment covering 1120–1129 (PSGPAGPRGP) has biased composition (pro residues). Residues Pro-1130 and Pro-1145 each carry the 4-hydroxyproline modification. The segment covering 1130–1145 (PGSSGSTGKDGVNGLP) has biased composition (low complexity). The residue at position 1150 (Pro-1150) is a 3-hydroxyproline. Pro-1151 is subject to 4-hydroxyproline. Positions 1163–1178 (AGPPGPPGPPGPPGPP) are enriched in pro residues. Pro-1165 carries the 3-hydroxyproline modification. Pro-1166 is modified (4-hydroxyproline). Pro-1168 carries the post-translational modification 3-hydroxyproline. Pro-1169 is subject to 4-hydroxyproline. Pro-1171 carries the post-translational modification 3-hydroxyproline. Pro-1172, Pro-1175, and Pro-1178 each carry 4-hydroxyproline. Allysine is present on Lys-1194. Residues 1205-1450 (DDANVVRDRD…GIDIGPVCFL (246 aa)) constitute a propeptide, C-terminal propeptide. A Fibrillar collagen NC1 domain is found at 1215-1450 (LEVDTTLKSL…GIDIGPVCFL (236 aa)). 3 disulfides stabilise this stretch: Cys-1245–Cys-1277, Cys-1285–Cys-1448, and Cys-1356–Cys-1401. Ca(2+) is bound by residues Asp-1263, Asn-1265, Gln-1266, Cys-1268, and Asp-1271. The N-linked (GlcNAc...) asparagine glycan is linked to Asn-1351.

The protein belongs to the fibrillar collagen family. In terms of assembly, trimers of one alpha 2(I) and two alpha 1(I) chains. In terms of processing, contains mostly 4-hydroxyproline. Proline residues at the third position of the tripeptide repeating unit (G-X-Y) are hydroxylated in some or all of the chains. Contains 3-hydroxyproline at a few sites. This modification occurs on the first proline residue in the sequence motif Gly-Pro-Hyp, where Hyp is 4-hydroxyproline. Post-translationally, lysine residues at the third position of the tripeptide repeating unit (G-X-Y) are 5-hydroxylated in some or all of the chains. In terms of processing, O-glycosylated on hydroxylated lysine residues. The O-linked glycan consists of a Glc-Gal disaccharide.

The protein localises to the secreted. It localises to the extracellular space. It is found in the extracellular matrix. Its function is as follows. Type I collagen is a member of group I collagen (fibrillar forming collagen). The chain is Collagen alpha-1(I) chain (COL1A1) from Cynops pyrrhogaster (Japanese fire-bellied newt).